The sequence spans 471 residues: Cell division protein FtsP (471 aa).

Positions 1 to 27 form a signal peptide, tat-type signal; the sequence is MSLSRRSFLQASGVALAAGALPLKAEA. The Plastocyanin-like domain maps to 229 to 288; sequence VRLRLLNASNARRYELSMTDNRAFHVVASDLGFLPAPMTVKRLSLGPGERREVLVDMSQG.

It belongs to the FtsP family. In terms of processing, predicted to be exported by the Tat system. The position of the signal peptide cleavage has not been experimentally proven.

The protein resides in the periplasm. Cell division protein that is required for growth during stress conditions. May be involved in protecting or stabilizing the divisomal assembly under conditions of stress. In Rahnella sp. (strain Y9602), this protein is Cell division protein FtsP.